The following is a 426-amino-acid chain: Histidine--tRNA ligase (426 aa).

The protein belongs to the class-II aminoacyl-tRNA synthetase family. As to quaternary structure, homodimer.

It localises to the cytoplasm. The catalysed reaction is tRNA(His) + L-histidine + ATP = L-histidyl-tRNA(His) + AMP + diphosphate + H(+). This is Histidine--tRNA ligase from Legionella pneumophila (strain Paris).